The primary structure comprises 137 residues: NADH-quinone oxidoreductase subunit A (137 aa).

Transmembrane regions (helical) follow at residues 12–32 (WAFA…LGVS), 68–88 (LVAM…AWAV), and 94–114 (GWVG…GLVY).

Belongs to the complex I subunit 3 family. In terms of assembly, NDH-1 is composed of 13 different subunits. Subunits NuoA, H, J, K, L, M, N constitute the membrane sector of the complex.

It is found in the cell inner membrane. It catalyses the reaction a quinone + NADH + 5 H(+)(in) = a quinol + NAD(+) + 4 H(+)(out). NDH-1 shuttles electrons from NADH, via FMN and iron-sulfur (Fe-S) centers, to quinones in the respiratory chain. The immediate electron acceptor for the enzyme in this species is believed to be ubiquinone. Couples the redox reaction to proton translocation (for every two electrons transferred, four hydrogen ions are translocated across the cytoplasmic membrane), and thus conserves the redox energy in a proton gradient. This chain is NADH-quinone oxidoreductase subunit A, found in Ectopseudomonas mendocina (strain ymp) (Pseudomonas mendocina).